Here is a 492-residue protein sequence, read N- to C-terminus: Trichothecene C-15 hydroxylase (492 aa).

The helical transmembrane segment at 6 to 26 (LWPLLALSGGTGLAYLVVVVV) threads the bilayer. Basic and acidic residues predominate over residues 88–106 (AMKDVRGHRKSGEPEHGKD). The tract at residues 88–116 (AMKDVRGHRKSGEPEHGKDPISVQSNGDN) is disordered. N-linked (GlcNAc...) asparagine glycans are attached at residues N124, N198, and N290. C438 contacts heme.

It belongs to the cytochrome P450 family. The cofactor is heme.

The protein resides in the membrane. The protein operates within sesquiterpene biosynthesis; trichothecene biosynthesis. Its function is as follows. Trichothecene C-15 hydroxylase; part of the core gene cluster that mediates the biosynthesis of trichothecenes, a very large family of chemically related bicyclic sesquiterpene compounds acting as mycotoxins, including T2-toxin. The biosynthesis of trichothecenes begins with the cyclization of farnesyl diphosphate to trichodiene and is catalyzed by the trichodiene synthase TRI5. Trichodiene undergoes a series of oxygenations catalyzed by the cytochrome P450 monooxygenase TRI4. TRI4 controls the addition of four oxygens at C-2, C-3, C-11, and the C-12, C-13-epoxide to form the intermediate isotrichotriol. Isotrichotriol then undergoes a non-enzymatic isomerization and cyclization to form isotrichodermol. During this process, the oxygen at the C-2 position becomes the pyran ring oxygen and the hydroxyl group at C-11 is lost. More complex type A trichothecenes are built by modifying isotrichodermol through a series of paired hydroxylation and acetylation or acylation steps. Isotrichodermol is converted to isotrichodermin by the acetyltransferase TRI101. TRI101 encodes a C-3 transacetylase that acts as a self-protection or resistance factor during biosynthesis and that the presence of a free C-3 hydroxyl group is a key component of Fusarium trichothecene phytotoxicity. A second hydroxyl group is added to C-15 by the trichothecene C-15 hydroxylase TRI11, producing 15-decalonectrin, which is then acetylated by TRI3, producing calonectrin. A third hydroxyl group is added at C-4 by the cytochrome P450 monooxygenase TRI13, converting calonectrin to 3,15-diacetoxyspirpenol, which is subsequently acetylated by the acetyltransferase TRI7. A fourth hydroxyl group is added to C-8 by the cytochrome P450 monooxygenase TRI1, followed by the addition of an isovaleryl moiety by TRI16. Finally, the acetyl group is removed from the C-3 position by the trichothecene C-3 esterase TRI8 to produce T-2 toxin. The chain is Trichothecene C-15 hydroxylase from Fusarium sporotrichioides.